Consider the following 283-residue polypeptide: Pantothenate synthetase (283 aa).

31–38 is an ATP binding site; the sequence is MGALHDGH. Histidine 38 functions as the Proton donor in the catalytic mechanism. Glutamine 62 contributes to the (R)-pantoate binding site. Beta-alanine is bound at residue glutamine 62. 148–151 lines the ATP pocket; that stretch reads GKKD. Glutamine 154 lines the (R)-pantoate pocket. ATP-binding positions include valine 177 and 185-188; that span reads KSSR.

It belongs to the pantothenate synthetase family. Homodimer.

The protein localises to the cytoplasm. The enzyme catalyses (R)-pantoate + beta-alanine + ATP = (R)-pantothenate + AMP + diphosphate + H(+). It functions in the pathway cofactor biosynthesis; (R)-pantothenate biosynthesis; (R)-pantothenate from (R)-pantoate and beta-alanine: step 1/1. Its function is as follows. Catalyzes the condensation of pantoate with beta-alanine in an ATP-dependent reaction via a pantoyl-adenylate intermediate. In Staphylococcus aureus (strain USA300), this protein is Pantothenate synthetase.